Here is a 155-residue protein sequence, read N- to C-terminus: uncharacterized protein (155 aa).

Positions 37-140 constitute an SCP domain; sequence IAELRKKLNL…GGYRLKTTDN (104 aa).

This is an uncharacterized protein from Borreliella burgdorferi (strain ATCC 35210 / DSM 4680 / CIP 102532 / B31) (Borrelia burgdorferi).